The primary structure comprises 250 residues: Anamorsin homolog 2 (250 aa).

The N-terminal SAM-like domain stretch occupies residues 1 to 102; sequence MNLKITINQQ…QTKKINIPQQ (102 aa). The tract at residues 102-149 is linker; that stretch reads QDFNNCYGKYDYIEQKFQNQINFFKQVDLKGNQETIDENELLNDGVEV. 4 residues coordinate [2Fe-2S] cluster: Cys155, Cys162, Cys165, and Cys167. The segment at 155 to 167 is fe-S binding site A; sequence CASKPRACANCTC. 4 residues coordinate [4Fe-4S] cluster: Cys193, Cys196, Cys204, and Cys207. 2 consecutive short sequence motifs (cx2C motif) follow at residues 193–196 and 204–207; these read CGSC and CANC. The tract at residues 193-207 is fe-S binding site B; the sequence is CGSCYLGDAFRCANC.

It belongs to the anamorsin family. As to quaternary structure, monomer. The cofactor is [2Fe-2S] cluster. It depends on [4Fe-4S] cluster as a cofactor.

Its subcellular location is the cytoplasm. The protein localises to the mitochondrion intermembrane space. Its function is as follows. Component of the cytosolic iron-sulfur (Fe-S) protein assembly (CIA) machinery. Required for the maturation of extramitochondrial Fe-S proteins. Part of an electron transfer chain functioning in an early step of cytosolic Fe-S biogenesis, facilitating the de novo assembly of a [4Fe-4S] cluster on the cytosolic Fe-S scaffold complex. Electrons are transferred from NADPH via a FAD- and FMN-containing diflavin oxidoreductase. Together with the diflavin oxidoreductase, also required for the assembly of the diferric tyrosyl radical cofactor of ribonucleotide reductase (RNR), probably by providing electrons for reduction during radical cofactor maturation in the catalytic small subunit. The chain is Anamorsin homolog 2 from Paramecium tetraurelia.